We begin with the raw amino-acid sequence, 238 residues long: Uracil-DNA glycosylase (238 aa).

Residue D81 is the Proton acceptor of the active site.

This sequence belongs to the uracil-DNA glycosylase (UDG) superfamily. UNG family.

It localises to the cytoplasm. The catalysed reaction is Hydrolyzes single-stranded DNA or mismatched double-stranded DNA and polynucleotides, releasing free uracil.. Functionally, excises uracil residues from the DNA which can arise as a result of misincorporation of dUMP residues by DNA polymerase or due to deamination of cytosine. The sequence is that of Uracil-DNA glycosylase from Corynebacterium efficiens (strain DSM 44549 / YS-314 / AJ 12310 / JCM 11189 / NBRC 100395).